A 235-amino-acid polypeptide reads, in one-letter code: Ribosomal RNA large subunit methyltransferase E (235 aa).

The S-adenosyl-L-methionine site is built by G76, W78, D99, D115, and D139. K179 serves as the catalytic Proton acceptor.

It belongs to the class I-like SAM-binding methyltransferase superfamily. RNA methyltransferase RlmE family.

It localises to the cytoplasm. The catalysed reaction is uridine(2552) in 23S rRNA + S-adenosyl-L-methionine = 2'-O-methyluridine(2552) in 23S rRNA + S-adenosyl-L-homocysteine + H(+). Specifically methylates the uridine in position 2552 of 23S rRNA at the 2'-O position of the ribose in the fully assembled 50S ribosomal subunit. The polypeptide is Ribosomal RNA large subunit methyltransferase E (Rhodopseudomonas palustris (strain BisB5)).